The following is a 454-amino-acid chain: Protein pid-2 (454 aa).

Residues 31–61 form a disordered region; that stretch reads VQNNQKEHPPVQEIKTVSSKSKEHRVSSSRK. Residues 50 to 61 show a composition bias toward basic and acidic residues; it reads KSKEHRVSSSRK.

As to quaternary structure, may interact with pid-4, pid-5, app-1 and prmt-5. Expressed throughout the mitotic and meiotic regions of the germline and in oocytes.

It is found in the cytoplasm. The protein localises to the perinuclear region. It localises to the cytoplasmic granule. Involved in gene silencing mediated by a class of 21 nucleotide PIWI-interacting RNAs (piRNAs) that possess a uracil residue at the 5'-end (also called 21U-RNAs) and that guide the Piwi protein prg-1 to its DNA targets for silencing. Not required for the biogenesis of 21U-RNAs. May also be involved in gene silencing mediated by 22G-siRNAs (a class of 22 nucleotide endogenous small interfering RNAs (siRNAs) that possess a triphosphorylated guanine residue at the 5'-end) and 26G-siRNAs (a class of 26 nucleotide siRNAs that possess a guanine residue at the 5'-end). Required for the biogenesis of secondary and tertiary 22G-siRNAs from many loci. Specifically, promotes the production of 22G-siRNAs from the 5' end of target mRNAs. May play a role in the production of 26G-siRNAs. Plays a role in small RNA-directed transgenerational epigenetic inheritance (also called RNAe) over several generations and germline immortality. Together with the argonaut protein hrde-1, promotes the silencing of the DNA transposable element Tc1. Required for the formation of liquid-like condensates in the cytoplasm called Z granules, playing a role in maintaining their assembly, viscosity and morphology in adult germ cells, and localization in early embryos. This is Protein pid-2 from Caenorhabditis elegans.